A 65-amino-acid polypeptide reads, in one-letter code: Large ribosomal subunit protein uL29 (65 aa).

This sequence belongs to the universal ribosomal protein uL29 family.

This chain is Large ribosomal subunit protein uL29, found in Syntrophus aciditrophicus (strain SB).